A 556-amino-acid polypeptide reads, in one-letter code: Arginine--tRNA ligase (556 aa).

The 'HIGH' region motif lies at 132–142; the sequence is ANPTGDLHLGH.

It belongs to the class-I aminoacyl-tRNA synthetase family. As to quaternary structure, monomer.

The protein resides in the cytoplasm. It catalyses the reaction tRNA(Arg) + L-arginine + ATP = L-arginyl-tRNA(Arg) + AMP + diphosphate. This is Arginine--tRNA ligase from Listeria monocytogenes serotype 4b (strain CLIP80459).